Consider the following 313-residue polypeptide: Porphobilinogen deaminase (313 aa).

S-(dipyrrolylmethanemethyl)cysteine is present on Cys241.

Belongs to the HMBS family. Monomer. The cofactor is dipyrromethane.

The catalysed reaction is 4 porphobilinogen + H2O = hydroxymethylbilane + 4 NH4(+). The protein operates within porphyrin-containing compound metabolism; protoporphyrin-IX biosynthesis; coproporphyrinogen-III from 5-aminolevulinate: step 2/4. It participates in porphyrin-containing compound metabolism; chlorophyll biosynthesis. Tetrapolymerization of the monopyrrole PBG into the hydroxymethylbilane pre-uroporphyrinogen in several discrete steps. The protein is Porphobilinogen deaminase of Chlorobium phaeobacteroides (strain BS1).